A 495-amino-acid polypeptide reads, in one-letter code: Cobyric acid synthase (495 aa).

One can recognise a GATase cobBQ-type domain in the interval 262-445 (CLEIAVIRLP…LHGLFDNHRW (184 aa)). The active-site Nucleophile is the C340. H437 is a catalytic residue.

The protein belongs to the CobB/CobQ family. CobQ subfamily.

It participates in cofactor biosynthesis; adenosylcobalamin biosynthesis. Its function is as follows. Catalyzes amidations at positions B, D, E, and G on adenosylcobyrinic A,C-diamide. NH(2) groups are provided by glutamine, and one molecule of ATP is hydrogenolyzed for each amidation. The sequence is that of Cobyric acid synthase from Synechococcus sp. (strain JA-3-3Ab) (Cyanobacteria bacterium Yellowstone A-Prime).